Reading from the N-terminus, the 101-residue chain is Apolipoprotein C-II (101 aa).

An N-terminal signal peptide occupies residues 1–22 (MGTRFLLALCLVLLVLGFEVQG). Residues 23–28 (AQLPQQ) constitute a propeptide, removed in mature form. A lipid binding region spans residues 66 to 74 (AVDEKLRDL). The lipoprotein lipase cofactor stretch occupies residues 78-101 (STAAMSTYTGIFTDQVLSVLKGEE).

The protein belongs to the apolipoprotein C2 family. In terms of processing, proapolipoprotein C-II is synthesized as a sialic acid containing glycoprotein which is subsequently desialylated prior to its proteolytic processing. Post-translationally, proapolipoprotein C-II, the major form found in plasma undergoes proteolytic cleavage of its N-terminal hexapeptide to generate apolipoprotein C-II, which occurs as the minor form in plasma.

It is found in the secreted. Component of chylomicrons, very low-density lipoproteins (VLDL), low-density lipoproteins (LDL), and high-density lipoproteins (HDL) in plasma. Plays an important role in lipoprotein metabolism as an activator of lipoprotein lipase. Both proapolipoprotein C-II and apolipoprotein C-II can activate lipoprotein lipase. In Papio anubis (Olive baboon), this protein is Apolipoprotein C-II (APOC2).